The chain runs to 74 residues: Brevinin-2Tb (74 aa).

Positions 1–22 (MFTMKKSLLLFFFLGTISLSLC) are cleaved as a signal peptide. Positions 23–40 (QEERNADEDDGEMTEEEK) are excised as a propeptide. Cysteine 68 and cysteine 74 form a disulfide bridge.

Belongs to the frog skin active peptide (FSAP) family. Brevinin subfamily. In terms of tissue distribution, expressed by the skin glands.

The protein resides in the secreted. Its function is as follows. Antimicrobial peptide. In Rana temporaria (European common frog), this protein is Brevinin-2Tb.